The following is a 38-amino-acid chain: Cytochrome b6-f complex subunit 5 (38 aa).

Residues 5–25 traverse the membrane as a helical segment; it reads LLLGIVLGLIPITLAGLFVAA.

Belongs to the PetG family. The 4 large subunits of the cytochrome b6-f complex are cytochrome b6, subunit IV (17 kDa polypeptide, PetD), cytochrome f and the Rieske protein, while the 4 small subunits are PetG, PetL, PetM and PetN. The complex functions as a dimer.

Its subcellular location is the cellular thylakoid membrane. Component of the cytochrome b6-f complex, which mediates electron transfer between photosystem II (PSII) and photosystem I (PSI), cyclic electron flow around PSI, and state transitions. PetG is required for either the stability or assembly of the cytochrome b6-f complex. The sequence is that of Cytochrome b6-f complex subunit 5 from Crocosphaera subtropica (strain ATCC 51142 / BH68) (Cyanothece sp. (strain ATCC 51142)).